Reading from the N-terminus, the 291-residue chain is ATP synthase gamma chain (291 aa).

Belongs to the ATPase gamma chain family. In terms of assembly, F-type ATPases have 2 components, CF(1) - the catalytic core - and CF(0) - the membrane proton channel. CF(1) has five subunits: alpha(3), beta(3), gamma(1), delta(1), epsilon(1). CF(0) has three main subunits: a, b and c.

The protein resides in the cell inner membrane. Its function is as follows. Produces ATP from ADP in the presence of a proton gradient across the membrane. The gamma chain is believed to be important in regulating ATPase activity and the flow of protons through the CF(0) complex. The chain is ATP synthase gamma chain from Neisseria meningitidis serogroup A / serotype 4A (strain DSM 15465 / Z2491).